We begin with the raw amino-acid sequence, 365 residues long: Histidinol-phosphate aminotransferase (365 aa).

The tract at residues 1-21 (MSRPVPNPGILDIAPYTPGKS) is disordered. At K221 the chain carries N6-(pyridoxal phosphate)lysine.

This sequence belongs to the class-II pyridoxal-phosphate-dependent aminotransferase family. Histidinol-phosphate aminotransferase subfamily. As to quaternary structure, homodimer. It depends on pyridoxal 5'-phosphate as a cofactor.

It catalyses the reaction L-histidinol phosphate + 2-oxoglutarate = 3-(imidazol-4-yl)-2-oxopropyl phosphate + L-glutamate. It functions in the pathway amino-acid biosynthesis; L-histidine biosynthesis; L-histidine from 5-phospho-alpha-D-ribose 1-diphosphate: step 7/9. The chain is Histidinol-phosphate aminotransferase from Rhodopseudomonas palustris (strain ATCC BAA-98 / CGA009).